Consider the following 273-residue polypeptide: Tryptophan synthase alpha chain (273 aa).

Residues Glu49 and Asp60 each act as proton acceptor in the active site.

It belongs to the TrpA family. Tetramer of two alpha and two beta chains.

The enzyme catalyses (1S,2R)-1-C-(indol-3-yl)glycerol 3-phosphate + L-serine = D-glyceraldehyde 3-phosphate + L-tryptophan + H2O. Its pathway is amino-acid biosynthesis; L-tryptophan biosynthesis; L-tryptophan from chorismate: step 5/5. Its function is as follows. The alpha subunit is responsible for the aldol cleavage of indoleglycerol phosphate to indole and glyceraldehyde 3-phosphate. The polypeptide is Tryptophan synthase alpha chain (Halorhodospira halophila (strain DSM 244 / SL1) (Ectothiorhodospira halophila (strain DSM 244 / SL1))).